A 263-amino-acid chain; its full sequence is MKIAIAGASGRMGQMLIDTVLRTPGVTLAAALDRAGSDAVGQDAGARLGKATGVIVTDDLRTGLSQADVLIDFTRPEATLAHLEIARELGVGVVIGTTGFTAEQKASFKDYGATIGVVWAPNMSVGVNATFKLIEVAAKILAQGYDVEIVEAHHKHKIDAPSGTALKMGEIVAEAQGTTLAERAVYAREGETGPRMNGTIGFATVRGGDIVGDHTVLFVGEGERIEITHRSNSRQSYAEGAVRAACFLAGKKGLFDMNDVLGL.

NAD(+)-binding positions include 7-12 (GASGRM) and D33. An NADP(+)-binding site is contributed by R34. NAD(+)-binding positions include 96-98 (GTT) and 120-123 (APNM). H153 functions as the Proton donor/acceptor in the catalytic mechanism. H154 contacts (S)-2,3,4,5-tetrahydrodipicolinate. The active-site Proton donor is K157. (S)-2,3,4,5-tetrahydrodipicolinate is bound at residue 163–164 (GT).

This sequence belongs to the DapB family.

Its subcellular location is the cytoplasm. It catalyses the reaction (S)-2,3,4,5-tetrahydrodipicolinate + NAD(+) + H2O = (2S,4S)-4-hydroxy-2,3,4,5-tetrahydrodipicolinate + NADH + H(+). It carries out the reaction (S)-2,3,4,5-tetrahydrodipicolinate + NADP(+) + H2O = (2S,4S)-4-hydroxy-2,3,4,5-tetrahydrodipicolinate + NADPH + H(+). It functions in the pathway amino-acid biosynthesis; L-lysine biosynthesis via DAP pathway; (S)-tetrahydrodipicolinate from L-aspartate: step 4/4. Functionally, catalyzes the conversion of 4-hydroxy-tetrahydrodipicolinate (HTPA) to tetrahydrodipicolinate. The protein is 4-hydroxy-tetrahydrodipicolinate reductase of Ralstonia nicotianae (strain ATCC BAA-1114 / GMI1000) (Ralstonia solanacearum).